The following is a 125-amino-acid chain: Small ribosomal subunit protein uS13 (125 aa).

The protein belongs to the universal ribosomal protein uS13 family. As to quaternary structure, part of the 30S ribosomal subunit. Forms a loose heterodimer with protein S19. Forms two bridges to the 50S subunit in the 70S ribosome.

Its function is as follows. Located at the top of the head of the 30S subunit, it contacts several helices of the 16S rRNA. In the 70S ribosome it contacts the 23S rRNA (bridge B1a) and protein L5 of the 50S subunit (bridge B1b), connecting the 2 subunits; these bridges are implicated in subunit movement. Contacts the tRNAs in the A and P-sites. This Orientia tsutsugamushi (strain Ikeda) (Rickettsia tsutsugamushi) protein is Small ribosomal subunit protein uS13.